Here is a 1464-residue protein sequence, read N- to C-terminus: Bridge-like lipid transfer protein family member 3B (1464 aa).

The Chorein N-terminal domain occupies 3–94; sequence GIIKKQILKH…DKVIMEMSTC (92 aa). Disordered stretches follow at residues 267–297 and 409–436; these read STEQRKSMAPEPTQSSTVVASAQQVKTTQTS and DHNVGSPPKSPTHASPQHTQTEKDYPLK. The segment covering 278-297 has biased composition (polar residues); the sequence is PTQSSTVVASAQQVKTTQTS. A phosphoserine mark is found at S414, S418, S774, S935, and S1009. 3 disordered regions span residues 1066-1089, 1164-1183, and 1392-1413; these read SKEETPPVRTLKSQSSLSGKPKER, LQNYGETSPDAISTNSEGAQ, and QRSVTQATQTSPGVPWPSQSAN. 2 stretches are compositionally biased toward polar residues: residues 1164-1182 and 1394-1413; these read LQNYGETSPDAISTNSEGA and SVTQATQTSPGVPWPSQSAN. Residues 1418–1456 adopt a coiled-coil conformation; sequence SFDFTREQLMEENESLKQELAKAKMALAEAHLEKDALLH.

Monomer. Homodimer (via N-terminus). Associates with the Golgi-associated retrograde protein (GARP) complex. Interacts with GARP complex component VPS52. Interacts (via C-terminal coiled-coil domain) with STX6.

The protein resides in the cytoplasm. It is found in the cytosol. It localises to the early endosome. Its function is as follows. Tube-forming lipid transport protein which mediates the transfer of lipids between membranes at organelle contact sites. Required for retrograde traffic of vesicle clusters in the early endocytic pathway to the Golgi complex. The sequence is that of Bridge-like lipid transfer protein family member 3B from Homo sapiens (Human).